A 1169-amino-acid polypeptide reads, in one-letter code: Phospholipid-transporting ATPase IF (1169 aa).

Topologically, residues 1-47 are cytoplasmic; that stretch reads LGFDPPHQSDTRTIYIANRFPQNGLYTPQKFIDNRIISSKYTVWNFV. A helical transmembrane segment spans residues 48–69; that stretch reads PKNLFEQFRRVANFYFLIIFLV. Topologically, residues 70 to 74 are extracellular; that stretch reads QLMID. A helical membrane pass occupies residues 75–96; that stretch reads TPTSPITSGLPLFFVITVTAIK. At 97-281 the chain is on the cytoplasmic side; it reads QGYEDWLRHN…SAVEKSMNTF (185 aa). A helical membrane pass occupies residues 282–303; it reads LIIYLIILISEAIISTILKYTW. The Extracellular portion of the chain corresponds to 304 to 333; the sequence is QAEEKWDEPWYNQKTEHQRNSSKILRFISD. The helical transmembrane segment at 334–351 threads the bilayer; it reads FLAFLVLYNFIIPISLYV. At 352 to 868 the chain is on the cytoplasmic side; that stretch reads TVEMQKFLGS…HGHFYYIRIA (517 aa). Catalysis depends on aspartate 399, which acts as the 4-aspartylphosphate intermediate. Aspartate 399, lysine 400, threonine 401, glutamate 523, phenylalanine 564, lysine 587, arginine 618, threonine 698, glycine 699, aspartate 700, arginine 786, and lysine 792 together coordinate ATP. A Mg(2+)-binding site is contributed by aspartate 399. Threonine 401 contacts Mg(2+). The tract at residues 794-802 is required for binding to the RING-finger of HLTF; it reads KVIRLIKIS. Aspartate 813 provides a ligand contact to Mg(2+). 2 residues coordinate ATP: asparagine 816 and aspartate 817. Position 817 (aspartate 817) interacts with Mg(2+). The helical transmembrane segment at 869–890 threads the bilayer; that stretch reads TLVQYFFYKNVCFITPQFLYQF. Residues 891 to 902 lie on the Extracellular side of the membrane; the sequence is YCLFSQQTLYDS. A helical transmembrane segment spans residues 903 to 922; sequence VYLTLYNICFTSLPILIYSL. Residues 923 to 952 are Cytoplasmic-facing; sequence LEQHIDPHILQNKPTLYRDISKNRLLSIKT. The helical transmembrane segment at 953-974 threads the bilayer; sequence FLYWTILGFSRSFIFLFGSYFL. Over 975-989 the chain is Extracellular; that stretch reads IGKDASLLGNGQMFG. A helical membrane pass occupies residues 990–1012; that stretch reads NWTFGTLVFTVMVITVTVKMALE. Topologically, residues 1013–1017 are cytoplasmic; it reads THFWT. A helical transmembrane segment spans residues 1018-1039; the sequence is WINHLVTWGSIIFYFVFSLFYG. Residues 1040 to 1057 lie on the Extracellular side of the membrane; that stretch reads GILWPFLGSQNMYFVFIQ. Residues 1058–1082 form a helical membrane-spanning segment; the sequence is LVSSGSAWFAIILMVVTCLFLDVMK. Over 1083-1169 the chain is Cytoplasmic; sequence KVFDRQLHPT…TLSTMDSSTC (87 aa). Serine 1146 is modified (phosphoserine).

This sequence belongs to the cation transport ATPase (P-type) (TC 3.A.3) family. Type IV subfamily. As to quaternary structure, component of a P4-ATPase flippase complex which consists of a catalytic alpha subunit ATP11B and an accessory beta subunit TMEM30A. In terms of assembly, interacts with HLTF (via the RING-finger). Mg(2+) is required as a cofactor. As to expression, ubiquitously expressed.

It localises to the recycling endosome membrane. The protein localises to the early endosome. It is found in the endoplasmic reticulum. Its subcellular location is the golgi apparatus. The protein resides in the trans-Golgi network. It localises to the nucleus inner membrane. The catalysed reaction is ATP + H2O + phospholipidSide 1 = ADP + phosphate + phospholipidSide 2.. It carries out the reaction a 1,2-diacyl-sn-glycero-3-phospho-L-serine(out) + ATP + H2O = a 1,2-diacyl-sn-glycero-3-phospho-L-serine(in) + ADP + phosphate + H(+). The enzyme catalyses a 1,2-diacyl-sn-glycero-3-phosphoethanolamine(out) + ATP + H2O = a 1,2-diacyl-sn-glycero-3-phosphoethanolamine(in) + ADP + phosphate + H(+). Catalytic component of a P4-ATPase flippase complex which catalyzes the hydrolysis of ATP coupled to the transport of aminophospholipids, phosphatidylserines (PS) and phosphatidylethanolamines (PE), from the outer to the inner leaflet of intracellular membranes. May contribute to the maintenance of membrane lipid asymmetry in endosome compartment. Its function is as follows. Appears to play a role in the subnuclear trafficking of transcription factors with RING motifs. The polypeptide is Phospholipid-transporting ATPase IF (ATP11B) (Oryctolagus cuniculus (Rabbit)).